Consider the following 121-residue polypeptide: Small ribosomal subunit protein uS13 (121 aa).

The interval 93 to 121 (RGLPVRGQNTKNNARTRKGKATAIAGKKK) is disordered. Residues 106 to 121 (ARTRKGKATAIAGKKK) show a composition bias toward basic residues.

The protein belongs to the universal ribosomal protein uS13 family. As to quaternary structure, part of the 30S ribosomal subunit. Forms a loose heterodimer with protein S19. Forms two bridges to the 50S subunit in the 70S ribosome.

Located at the top of the head of the 30S subunit, it contacts several helices of the 16S rRNA. In the 70S ribosome it contacts the 23S rRNA (bridge B1a) and protein L5 of the 50S subunit (bridge B1b), connecting the 2 subunits; these bridges are implicated in subunit movement. Contacts the tRNAs in the A and P-sites. This chain is Small ribosomal subunit protein uS13, found in Streptococcus uberis (strain ATCC BAA-854 / 0140J).